A 1238-amino-acid polypeptide reads, in one-letter code: DNA-directed RNA polymerase subunit beta (1238 aa).

Positions 1186–1238 are disordered; that stretch reads IEGREDTPPEEVYEEGYEEGFEEESEELPEDIDFEPDSFDIENDDLDLEDFDI. A compositionally biased stretch (acidic residues) spans 1193–1238; that stretch reads PPEEVYEEGYEEGFEEESEELPEDIDFEPDSFDIENDDLDLEDFDI.

Belongs to the RNA polymerase beta chain family. As to quaternary structure, the RNAP catalytic core consists of 2 alpha, 1 beta, 1 beta' and 1 omega subunit. When a sigma factor is associated with the core the holoenzyme is formed, which can initiate transcription.

It carries out the reaction RNA(n) + a ribonucleoside 5'-triphosphate = RNA(n+1) + diphosphate. DNA-dependent RNA polymerase catalyzes the transcription of DNA into RNA using the four ribonucleoside triphosphates as substrates. The protein is DNA-directed RNA polymerase subunit beta of Thermoanaerobacter sp. (strain X514).